Here is a 309-residue protein sequence, read N- to C-terminus: UPF0282 protein Msed_0584 (309 aa).

It belongs to the UPF0282 family.

The polypeptide is UPF0282 protein Msed_0584 (Metallosphaera sedula (strain ATCC 51363 / DSM 5348 / JCM 9185 / NBRC 15509 / TH2)).